We begin with the raw amino-acid sequence, 515 residues long: Cell division control protein 6 homolog (515 aa).

Over residues 1 to 24 (MPTLRSATASASTAGTASPTAIAT) the composition is skewed to low complexity. Residues 1 to 70 (MPTLRSATAS…TPKLLSASPR (70 aa)) form a disordered region. The span at 43-52 (DASQFTSPHK) shows a compositional bias: polar residues.

This sequence belongs to the CDC6/cdc18 family.

It localises to the nucleus. In terms of biological role, may be involved in the initiation of DNA replication. The chain is Cell division control protein 6 homolog from Oryza sativa subsp. japonica (Rice).